We begin with the raw amino-acid sequence, 307 residues long: UDP-3-O-acyl-N-acetylglucosamine deacetylase (307 aa).

Positions 78, 241, and 245 each coordinate Zn(2+). H268 acts as the Proton donor in catalysis.

It belongs to the LpxC family. The cofactor is Zn(2+).

It carries out the reaction a UDP-3-O-[(3R)-3-hydroxyacyl]-N-acetyl-alpha-D-glucosamine + H2O = a UDP-3-O-[(3R)-3-hydroxyacyl]-alpha-D-glucosamine + acetate. The protein operates within glycolipid biosynthesis; lipid IV(A) biosynthesis; lipid IV(A) from (3R)-3-hydroxytetradecanoyl-[acyl-carrier-protein] and UDP-N-acetyl-alpha-D-glucosamine: step 2/6. Functionally, catalyzes the hydrolysis of UDP-3-O-myristoyl-N-acetylglucosamine to form UDP-3-O-myristoylglucosamine and acetate, the committed step in lipid A biosynthesis. This is UDP-3-O-acyl-N-acetylglucosamine deacetylase from Polaromonas sp. (strain JS666 / ATCC BAA-500).